A 201-amino-acid polypeptide reads, in one-letter code: Histone-like protein HC2 (201 aa).

Residues 1–69 (MLGVQKKCST…VAKKATAKKA (69 aa)) form a disordered region. 2 stretches are compositionally biased toward basic residues: residues 8–50 (CSTR…KTVA) and 59–69 (PVAKKATAKKA).

The protein belongs to the histone H1/H5 family. HCT subfamily.

Functionally, might have a role in establishing the nucleoid structure of elementary bodies. The protein is Histone-like protein HC2 (hctB) of Chlamydia trachomatis serovar D (strain ATCC VR-885 / DSM 19411 / UW-3/Cx).